The chain runs to 1639 residues: Protein GFS12 (1639 aa).

In terms of domain architecture, Protein kinase 1 spans 206 to 294 (LEEKSKLRCL…IRPSNILLSD (89 aa)). The 273-residue stretch at 336–608 (LKISSHLDWQ…FHGFGVDNKR (273 aa)) folds into the BEACH domain. Residues 715–788 (IAGDIFSIGC…AKSLLDSPYF (74 aa)) enclose the Protein kinase 2 domain. WD repeat units lie at residues 1290–1333 (AHHG…CVSS) and 1336–1373 (AHEE…LISL). Positions 1377 to 1398 (SPSDQDQASSDPSSKNNSNPCN) are enriched in low complexity. Residues 1377–1399 (SPSDQDQASSDPSSKNNSNPCNR) are disordered. WD repeat units lie at residues 1465 to 1499 (ALCS…RLFD), 1511 to 1549 (AHDG…TPQP), and 1609 to 1639 (RVKS…RICC).

The protein belongs to the protein kinase superfamily. Tyr protein kinase family. Interacts (via protein kinase 2 domain) with BCHC1 (via PH-BEACH domain). As to expression, weakly expressed in the cotyledons of germinating seedlings. Restricted to the vascular tissues of cotyledons. Detected in root tips, apical meristem, young flower buds and receptacles.

May act predominantly to suppress BCHC1, which itself is a negative factor in protein storage vacuole (PSV) trafficking regulation and plant effector triggered immunity (ETI). Required for ETI, but not for cell death. The chain is Protein GFS12 from Arabidopsis thaliana (Mouse-ear cress).